We begin with the raw amino-acid sequence, 86 residues long: Small ribosomal subunit protein uS17 (86 aa).

This sequence belongs to the universal ribosomal protein uS17 family. Part of the 30S ribosomal subunit.

In terms of biological role, one of the primary rRNA binding proteins, it binds specifically to the 5'-end of 16S ribosomal RNA. In Caldicellulosiruptor saccharolyticus (strain ATCC 43494 / DSM 8903 / Tp8T 6331), this protein is Small ribosomal subunit protein uS17.